The primary structure comprises 39 residues: Photosystem II reaction center protein J (39 aa).

The helical transmembrane segment at 9–29 (LWLVATVGGIAVITVLGIFIY) threads the bilayer.

It belongs to the PsbJ family. As to quaternary structure, PSII is composed of 1 copy each of membrane proteins PsbA, PsbB, PsbC, PsbD, PsbE, PsbF, PsbH, PsbI, PsbJ, PsbK, PsbL, PsbM, PsbT, PsbX, PsbY, PsbZ, Psb30/Ycf12, at least 3 peripheral proteins of the oxygen-evolving complex and a large number of cofactors. It forms dimeric complexes.

It localises to the plastid. The protein localises to the chloroplast thylakoid membrane. Its function is as follows. One of the components of the core complex of photosystem II (PSII). PSII is a light-driven water:plastoquinone oxidoreductase that uses light energy to abstract electrons from H(2)O, generating O(2) and a proton gradient subsequently used for ATP formation. It consists of a core antenna complex that captures photons, and an electron transfer chain that converts photonic excitation into a charge separation. This is Photosystem II reaction center protein J from Gracilaria tenuistipitata var. liui (Red alga).